Reading from the N-terminus, the 248-residue chain is Type III pantothenate kinase (248 aa).

Residue 8–15 participates in ATP binding; that stretch reads DAGNTRTK. Residues Tyr87 and 94-97 each bind substrate; that span reads GVDR. Asp96 serves as the catalytic Proton acceptor. Thr119 serves as a coordination point for ATP. Thr173 is a substrate binding site.

It belongs to the type III pantothenate kinase family. In terms of assembly, homodimer. NH4(+) serves as cofactor. Requires K(+) as cofactor.

The protein resides in the cytoplasm. The catalysed reaction is (R)-pantothenate + ATP = (R)-4'-phosphopantothenate + ADP + H(+). Its pathway is cofactor biosynthesis; coenzyme A biosynthesis; CoA from (R)-pantothenate: step 1/5. In terms of biological role, catalyzes the phosphorylation of pantothenate (Pan), the first step in CoA biosynthesis. The chain is Type III pantothenate kinase from Methylobacillus flagellatus (strain ATCC 51484 / DSM 6875 / VKM B-1610 / KT).